A 563-amino-acid polypeptide reads, in one-letter code: Nicalin (563 aa).

A signal peptide spans 1 to 29 (MQDEIIDFFRSPALLFYMTLMLTICVVNG). Topologically, residues 30-522 (SQQVGEVVET…NRLVAERVKP (493 aa)) are lumenal. Residue N232 is glycosylated (N-linked (GlcNAc...) asparagine). A helical transmembrane segment spans residues 523-543 (AVFELVIAAGVFTYLSAFYYI). The Cytoplasmic segment spans residues 544-563 (ATHSQNTIEGTVAAIRKSIF).

This sequence belongs to the nicastrin family. May interact with the levamisole-sensitive nicotinic acetylcholine receptor (L-AChR). May interact with nra-4 in the ER. In terms of tissue distribution, expressed in body wall, pharyngeal, and vulval muscles, excretory canal cell, head and motor neurons, and vulval epithelium.

It is found in the endoplasmic reticulum membrane. Functionally, involved in the recognition and selection of protein complexes to exit the endoplasmic reticulum (ER). In muscles, regulates levamisole-sensitive nicotinic acetylcholine receptor (L-AChR) subunit composition, possibly by allowing only specific L-AChR subunit combinations to exit the ER. Specifically, may promote the inclusion of alpha subunits unc-38 and unc-29 into L-AChR. Regulates L-AChR sensitivity to agonists such as nicotine and levamisole at neuro-muscular junctions. In touch neurons, may prevent ER exit of incorrectly folded mec-4-mec-10 ion channel. This Caenorhabditis elegans protein is Nicalin.